The following is a 436-amino-acid chain: Cytokine receptor-like factor 3 (436 aa).

Residues L9–K87 adopt a coiled-coil conformation. Positions P177–P270 constitute a Fibronectin type-III domain.

It belongs to the cytokine receptor-like factor 3 family.

The protein resides in the cytoplasm. In terms of biological role, may play a role in the negative regulation of cell cycle progression. The polypeptide is Cytokine receptor-like factor 3 (crlf3) (Xenopus laevis (African clawed frog)).